Reading from the N-terminus, the 185-residue chain is ATP-dependent protease subunit HslV (185 aa).

Thr-14 is an active-site residue. Residues Ala-168, Cys-171, and Thr-174 each contribute to the Na(+) site.

This sequence belongs to the peptidase T1B family. HslV subfamily. In terms of assembly, a double ring-shaped homohexamer of HslV is capped on each side by a ring-shaped HslU homohexamer. The assembly of the HslU/HslV complex is dependent on binding of ATP.

It is found in the cytoplasm. It catalyses the reaction ATP-dependent cleavage of peptide bonds with broad specificity.. Allosterically activated by HslU binding. Functionally, protease subunit of a proteasome-like degradation complex believed to be a general protein degrading machinery. The sequence is that of ATP-dependent protease subunit HslV from Hyphomonas neptunium (strain ATCC 15444).